Reading from the N-terminus, the 459-residue chain is Vanillin aminotransferase (459 aa).

Residues 115–116 (GS) and Asp-255 contribute to the pyridoxal 5'-phosphate site. The residue at position 284 (Lys-284) is an N6-(pyridoxal phosphate)lysine. Residue 320 to 321 (FT) coordinates pyridoxal 5'-phosphate. The stretch at 430 to 457 (LEELDELIRIYGKALKDTEKRVEELKSQ) forms a coiled coil.

The protein belongs to the class-III pyridoxal-phosphate-dependent aminotransferase family. As to expression, confined to the placenta of green fruits at high levels. Barely detectable in the pericarp and seeds as well as in the placenta of mature fruits.

The catalysed reaction is vanillin + L-alanine = vanillylamine + pyruvate. It participates in aromatic compound metabolism; phenylpropanoid biosynthesis. Functionally, involved in the biosynthesis of capsaicinoids natural products, pungent alkaloids synthesized from phenylpropanoid intermediates in the placental tissue of chili pepper fruit acting as repellant on herbivorous mammals and conferring spiciness to hot peppers. Can transfer an amine from vanillylamine to pyruvate forming vanillin and L-alanine. This chain is Vanillin aminotransferase, found in Capsicum annuum (Capsicum pepper).